A 391-amino-acid polypeptide reads, in one-letter code: Probable FAD-dependent oxidoreductase PA4991 (391 aa).

FAD is bound by residues Ala17, Glu36, 44–45, 49–51, and 346–347; these read QS, QGI, and LA.

This sequence belongs to the DAO family. As to quaternary structure, monomer. FAD is required as a cofactor.

Functionally, probably functions as a FAD-dependent oxidoreductase, whose physiological substrate is unknown. Does not display amino-acid oxidase or glycerol-3-phosphate dehydrogenase activities. Is essential for growth of P.aeruginosa in the sputum of cystic fibrosis patients. The sequence is that of Probable FAD-dependent oxidoreductase PA4991 from Pseudomonas aeruginosa (strain ATCC 15692 / DSM 22644 / CIP 104116 / JCM 14847 / LMG 12228 / 1C / PRS 101 / PAO1).